Reading from the N-terminus, the 97-residue chain is uncharacterized protein (97 aa).

The residue at position 2 (serine 2) is an N-acetylserine.

This is an uncharacterized protein from Mycobacterium tuberculosis (strain ATCC 25618 / H37Rv).